Reading from the N-terminus, the 108-residue chain is DNA-binding protein HBbu (108 aa).

It belongs to the bacterial histone-like protein family.

In terms of biological role, histone-like DNA-binding protein which is capable of wrapping DNA to stabilize it, and thus to prevent its denaturation under extreme environmental conditions. The sequence is that of DNA-binding protein HBbu (hbb) from Borrelia andersonii (Borreliella andersonii).